Consider the following 284-residue polypeptide: Bifunctional protein FolD (284 aa).

Residues 163–165 and Ser-188 each bind NADP(+); that span reads GRS.

It belongs to the tetrahydrofolate dehydrogenase/cyclohydrolase family. In terms of assembly, homodimer.

The catalysed reaction is (6R)-5,10-methylene-5,6,7,8-tetrahydrofolate + NADP(+) = (6R)-5,10-methenyltetrahydrofolate + NADPH. It carries out the reaction (6R)-5,10-methenyltetrahydrofolate + H2O = (6R)-10-formyltetrahydrofolate + H(+). It functions in the pathway one-carbon metabolism; tetrahydrofolate interconversion. Catalyzes the oxidation of 5,10-methylenetetrahydrofolate to 5,10-methenyltetrahydrofolate and then the hydrolysis of 5,10-methenyltetrahydrofolate to 10-formyltetrahydrofolate. The sequence is that of Bifunctional protein FolD from Lactococcus lactis subsp. lactis (strain IL1403) (Streptococcus lactis).